The following is a 931-amino-acid chain: Isoleucine--tRNA ligase (931 aa).

Residues 1 to 14 show a composition bias toward polar residues; sequence MDYSKTLNLPQTQF. The tract at residues 1–25 is disordered; sequence MDYSKTLNLPQTQFPMRGNLPQREP. The 'HIGH' region motif lies at 57 to 67; the sequence is PYANGHIHLGH. Glutamate 559 is a binding site for L-isoleucyl-5'-AMP. Positions 600–604 match the 'KMSKS' region motif; that stretch reads KMSKS. Lysine 603 is an ATP binding site. Positions 898, 901, 918, and 921 each coordinate Zn(2+).

It belongs to the class-I aminoacyl-tRNA synthetase family. IleS type 1 subfamily. Monomer. It depends on Zn(2+) as a cofactor.

It localises to the cytoplasm. It carries out the reaction tRNA(Ile) + L-isoleucine + ATP = L-isoleucyl-tRNA(Ile) + AMP + diphosphate. In terms of biological role, catalyzes the attachment of isoleucine to tRNA(Ile). As IleRS can inadvertently accommodate and process structurally similar amino acids such as valine, to avoid such errors it has two additional distinct tRNA(Ile)-dependent editing activities. One activity is designated as 'pretransfer' editing and involves the hydrolysis of activated Val-AMP. The other activity is designated 'posttransfer' editing and involves deacylation of mischarged Val-tRNA(Ile). The protein is Isoleucine--tRNA ligase of Desulforamulus reducens (strain ATCC BAA-1160 / DSM 100696 / MI-1) (Desulfotomaculum reducens).